Reading from the N-terminus, the 387-residue chain is Arginine biosynthesis bifunctional protein ArgJ 2 (387 aa).

Thr147, Lys169, Thr180, Glu259, Asn382, and Thr387 together coordinate substrate. Residue Thr180 is the Nucleophile of the active site.

Belongs to the ArgJ family. Heterotetramer of two alpha and two beta chains.

The protein localises to the cytoplasm. The enzyme catalyses N(2)-acetyl-L-ornithine + L-glutamate = N-acetyl-L-glutamate + L-ornithine. It carries out the reaction L-glutamate + acetyl-CoA = N-acetyl-L-glutamate + CoA + H(+). The protein operates within amino-acid biosynthesis; L-arginine biosynthesis; L-ornithine and N-acetyl-L-glutamate from L-glutamate and N(2)-acetyl-L-ornithine (cyclic): step 1/1. Its pathway is amino-acid biosynthesis; L-arginine biosynthesis; N(2)-acetyl-L-ornithine from L-glutamate: step 1/4. Its function is as follows. Catalyzes two activities which are involved in the cyclic version of arginine biosynthesis: the synthesis of N-acetylglutamate from glutamate and acetyl-CoA as the acetyl donor, and of ornithine by transacetylation between N(2)-acetylornithine and glutamate. The polypeptide is Arginine biosynthesis bifunctional protein ArgJ 2 (Nostoc sp. (strain PCC 7120 / SAG 25.82 / UTEX 2576)).